Consider the following 74-residue polypeptide: UPF0154 protein OB1676 (74 aa).

Residues 4 to 24 (IWVVLIAIAALVAGVALGFFI) form a helical membrane-spanning segment.

Belongs to the UPF0154 family.

The protein resides in the membrane. The protein is UPF0154 protein OB1676 of Oceanobacillus iheyensis (strain DSM 14371 / CIP 107618 / JCM 11309 / KCTC 3954 / HTE831).